The sequence spans 99 residues: Small ribosomal subunit protein uS14c (99 aa).

This sequence belongs to the universal ribosomal protein uS14 family. Part of the 30S ribosomal subunit.

The protein resides in the plastid. It is found in the chloroplast. Functionally, binds 16S rRNA, required for the assembly of 30S particles. The chain is Small ribosomal subunit protein uS14c from Welwitschia mirabilis (Tree tumbo).